Here is a 193-residue protein sequence, read N- to C-terminus: 7-methyl-GTP pyrophosphatase (193 aa).

The Proton acceptor role is filled by D70.

The protein belongs to the Maf family. YceF subfamily. It depends on a divalent metal cation as a cofactor.

It localises to the cytoplasm. The enzyme catalyses N(7)-methyl-GTP + H2O = N(7)-methyl-GMP + diphosphate + H(+). In terms of biological role, nucleoside triphosphate pyrophosphatase that hydrolyzes 7-methyl-GTP (m(7)GTP). May have a dual role in cell division arrest and in preventing the incorporation of modified nucleotides into cellular nucleic acids. The chain is 7-methyl-GTP pyrophosphatase from Vibrio cholerae serotype O1 (strain ATCC 39315 / El Tor Inaba N16961).